The sequence spans 481 residues: Tagaturonate/fructuronate epimerase (481 aa).

D161 functions as the Proton acceptor in the catalytic mechanism. H162 provides a ligand contact to a divalent metal cation. E266 serves as the catalytic Proton donor. Positions 308 and 341 each coordinate a divalent metal cation.

It belongs to the UxaE family. A divalent metal cation is required as a cofactor.

It catalyses the reaction keto-D-tagaturonate = keto-D-fructuronate. In terms of biological role, catalyzes the epimerization of D-tagaturonate (D-TagA) to D-fructuronate (D-FruA). In Thermotoga maritima (strain ATCC 43589 / DSM 3109 / JCM 10099 / NBRC 100826 / MSB8), this protein is Tagaturonate/fructuronate epimerase.